The sequence spans 400 residues: F-box/LRR-repeat protein 14 (400 aa).

The F-box domain maps to 2-48 (ETHISCLFPELLAMIFGYLDVRDKGRAAQVCTAWRDAAYHKSVWRGV). Positions 2 to 48 (ETHISCLFPELLAMIFGYLDVRDKGRAAQVCTAWRDAAYHKSVWRGV) are required for down-regulation of SNAI1. 5 LRR repeats span residues 144 to 163 (GLEV…GLLL), 170 to 191 (RLKS…GHLA), 203 to 225 (GLEQ…HISR), 229 to 250 (GLRL…LHLS), and 254 to 275 (SLRS…MHLA).

In terms of assembly, part of a SCF (SKP1-cullin-F-box) ubiquitin-protein ligase complex. Interacts with SKP1 and CUL1. Interacts with SNAI1; the interaction requires the phosphorylation of the two serine residues in the substrate destruction motif D-S-G-X(2,3,4)-S.

The protein resides in the cytoplasm. Functionally, substrate-recognition component of some SCF (SKP1-CUL1-F-box protein)-type E3 ubiquitin-protein ligase complexes. The SCF(FBXL14) complex acts by mediating ubiquitination and subsequent degradation of SNAI1. This chain is F-box/LRR-repeat protein 14 (FBXL14), found in Bos taurus (Bovine).